Here is a 495-residue protein sequence, read N- to C-terminus: MLLLGLLLLLPLLAGARLLWNWWKLRSLHLPPLAPGFLHLLQPDLPIYLLGLTQKFGPIYRLHLGLQDVVVLNSKRTIEEAMVKKWADFAGRPEPLTYKLVSRNYPDLSLGDYSLLWKAHKKLTRSALLLGIRDSMEPVVEQLTQEFCERMRAQPGTPVAIEEEFSLLTCSIICYLTFGDKIKDDNLMPAYYKCIQEVLKTWSHWSIQIVDVIPFLRFFPNPGLRRLKQAIEKRDHIVEMQLRQHKESLVAGQWRDMMDYMLQGVAQPSMEEGSGQLLEGHVHMAAVDLLIGGTETTANTLSWAVVFLLHHPEIQQRLQEELDHELGPGASSSRVPYKDRARLPLLNATIAEVLRLRPVVPLALPHRTTRPSSISGYDIPEGTVIIPNLQGAHLDETVWERPHEFWPDRFLEPGKNSRALAFGCGARVCLGEPLARLELFVVLTRLLQAFTLLPSGDALPSLQPLPHCSVILKMQPFQVRLQPRGMGAHSPGQSQ.

Heme b is bound by residues Arg-92 and Lys-121. Arg-234 lines the 17alpha-hydroxyprogesterone pocket. Arg-234 serves as a coordination point for progesterone. Heme b-binding residues include His-366, Arg-427, and Cys-429.

Belongs to the cytochrome P450 family. The cofactor is heme b.

It localises to the endoplasmic reticulum membrane. The protein localises to the microsome membrane. It catalyses the reaction progesterone + reduced [NADPH--hemoprotein reductase] + O2 = 21-hydroxyprogesterone + oxidized [NADPH--hemoprotein reductase] + H2O + H(+). It carries out the reaction 17alpha-hydroxyprogesterone + reduced [NADPH--hemoprotein reductase] + O2 = 11-deoxycortisol + oxidized [NADPH--hemoprotein reductase] + H2O + H(+). In terms of biological role, a cytochrome P450 monooxygenase that plays a major role in adrenal steroidogenesis. Catalyzes the hydroxylation at C-21 of progesterone and 17alpha-hydroxyprogesterone to respectively form 11-deoxycorticosterone and 11-deoxycortisol, intermediate metabolites in the biosynthetic pathway of mineralocorticoids and glucocorticoids. Mechanistically, uses molecular oxygen inserting one oxygen atom into a substrate, and reducing the second into a water molecule, with two electrons provided by NADPH via cytochrome P450 reductase (CPR; NADPH-ferrihemoprotein reductase). This Homo sapiens (Human) protein is Steroid 21-hydroxylase (CYP21A2).